Reading from the N-terminus, the 176-residue chain is MKNKTEYYDQFIAKVPNFPKKGILFYDITSVLLKPEVYTSLINEVYSFYNLKKIDCIAVVESRGYLIGAPLSLKMQLPLVLIRKEGKLPREVFGEEYELEYGFGRIEVHKDDVRMYSNILLIDDILATGGTLKSSAILLERAGGRVKNIFCFIELCGINGRRILEGYKVNSLVRYD.

It belongs to the purine/pyrimidine phosphoribosyltransferase family. As to quaternary structure, homodimer.

The protein localises to the cytoplasm. The catalysed reaction is AMP + diphosphate = 5-phospho-alpha-D-ribose 1-diphosphate + adenine. It participates in purine metabolism; AMP biosynthesis via salvage pathway; AMP from adenine: step 1/1. Its function is as follows. Catalyzes a salvage reaction resulting in the formation of AMP, that is energically less costly than de novo synthesis. The sequence is that of Adenine phosphoribosyltransferase from Borreliella afzelii (strain PKo) (Borrelia afzelii).